A 247-amino-acid chain; its full sequence is STING ER exit protein (247 aa).

S127 is modified (phosphoserine). Positions 195 to 216 (EAREIADSYANNARIIEKQLQR) form a coiled coil. A disordered region spans residues 215–247 (QRKGGKLSDVGIKTKTEDAPPPQKKQRGTLLER).

Belongs to the STEEP1 family.

In terms of biological role, molecular adapter that stimulates membrane curvature formation and subsequent endoplasmic reticulum exit site (ERES) establishment by recruiting PI3K complex I, leading to COPII vesicle-mediated transport. The polypeptide is STING ER exit protein (Drosophila melanogaster (Fruit fly)).